The following is a 347-amino-acid chain: uncharacterized protein (347 aa).

Residues 1 to 21 form the signal peptide; the sequence is MNKKSLNIVVMFGILMILAFS.

It belongs to the bacterial solute-binding protein 1 family. WtpA subfamily.

This is an uncharacterized protein from Methanococcus maripaludis (strain C5 / ATCC BAA-1333).